We begin with the raw amino-acid sequence, 228 residues long: Octanoyltransferase (228 aa).

One can recognise a BPL/LPL catalytic domain in the interval 32 to 214 (DVVPDTVLLV…HLRRLFERDW (183 aa)). Substrate contacts are provided by residues 77–84 (RGGDVTYH), 144–146 (SVG), and 157–159 (GIA). Cys175 functions as the Acyl-thioester intermediate in the catalytic mechanism.

Belongs to the LipB family.

The protein localises to the cytoplasm. It catalyses the reaction octanoyl-[ACP] + L-lysyl-[protein] = N(6)-octanoyl-L-lysyl-[protein] + holo-[ACP] + H(+). Its pathway is protein modification; protein lipoylation via endogenous pathway; protein N(6)-(lipoyl)lysine from octanoyl-[acyl-carrier-protein]: step 1/2. Functionally, catalyzes the transfer of endogenously produced octanoic acid from octanoyl-acyl-carrier-protein onto the lipoyl domains of lipoate-dependent enzymes. Lipoyl-ACP can also act as a substrate although octanoyl-ACP is likely to be the physiological substrate. In Syntrophobacter fumaroxidans (strain DSM 10017 / MPOB), this protein is Octanoyltransferase.